Reading from the N-terminus, the 165-residue chain is NAD(P)H-quinone oxidoreductase subunit J, chloroplastic (165 aa).

This sequence belongs to the complex I 30 kDa subunit family. As to quaternary structure, NDH is composed of at least 16 different subunits, 5 of which are encoded in the nucleus.

The protein resides in the plastid. It localises to the chloroplast thylakoid membrane. The catalysed reaction is a plastoquinone + NADH + (n+1) H(+)(in) = a plastoquinol + NAD(+) + n H(+)(out). It carries out the reaction a plastoquinone + NADPH + (n+1) H(+)(in) = a plastoquinol + NADP(+) + n H(+)(out). In terms of biological role, NDH shuttles electrons from NAD(P)H:plastoquinone, via FMN and iron-sulfur (Fe-S) centers, to quinones in the photosynthetic chain and possibly in a chloroplast respiratory chain. The immediate electron acceptor for the enzyme in this species is believed to be plastoquinone. Couples the redox reaction to proton translocation, and thus conserves the redox energy in a proton gradient. The chain is NAD(P)H-quinone oxidoreductase subunit J, chloroplastic from Ipomoea purpurea (Common morning glory).